The sequence spans 180 residues: Centromere protein M (180 aa).

The protein resides in the nucleus. The protein localises to the chromosome. It is found in the centromere. Functionally, probable component of a centromeric complex involved in assembly of kinetochore proteins, mitotic progression and chromosome segregation. This chain is Centromere protein M (cenpm), found in Xenopus laevis (African clawed frog).